Reading from the N-terminus, the 292-residue chain is Aquaporin-3 (292 aa).

Residues 1–24 are Cytoplasmic-facing; the sequence is MGRQKELMNRCGEMLHIRYRLLRQ. Residues 25–42 traverse the membrane as a helical segment; sequence ALAECLGTLILVMFGCGS. Residues 43–56 lie on the Extracellular side of the membrane; the sequence is VAQVVLSRGTHGGF. The helical transmembrane segment at 57–74 threads the bilayer; that stretch reads LTINLAFGFAVTLAILVA. Topologically, residues 75–78 are cytoplasmic; the sequence is GQVS. The segment at residues 79 to 92 is an intramembrane region (discontinuously helical); it reads GAHLNPAVTFAMCF. Residues 83 to 85 carry the NPA 1 motif; it reads NPA. Topologically, residues 93–100 are cytoplasmic; it reads LAREPWIK. Residues 101-121 form a helical membrane-spanning segment; the sequence is LPIYTLAQTLGAFLGAGIVFG. Residues 122–159 are Extracellular-facing; sequence LYYDAIWAFAGNELVVSGPNGTAGIFATYPSGHLDMVN. The N-linked (GlcNAc...) asparagine glycan is linked to Asn-141. Residues 160–177 form a helical membrane-spanning segment; that stretch reads GFFDQFIGTAALIVCVLA. The Cytoplasmic segment spans residues 178-189; that stretch reads IVDPYNNPVPRG. The helical transmembrane segment at 190-206 threads the bilayer; that stretch reads LEAFTVGLVVLVIGTSM. Residues 207–210 are Extracellular-facing; sequence GFNS. The discontinuously helical intramembrane region spans 211 to 224; that stretch reads GYAVNPARDFGPRL. The short motif at 215–217 is the NPA 2 element; it reads NPA. At 225–242 the chain is on the extracellular side; that stretch reads FTALAGWGSEVFTTGQNW. Residues 243-264 form a helical membrane-spanning segment; the sequence is WWVPIVSPLLGSIGGVFVYQLM. At 265-292 the chain is on the cytoplasmic side; it reads IGCHLEQPPPSTEAENVKLAHMKHKEQI.

This sequence belongs to the MIP/aquaporin (TC 1.A.8) family. As to quaternary structure, homotetramer; each monomer provides an independent glycerol/water pore. Could also exist in other oligomeric states. As to expression, detected in kidney medulla and papilla, in collecting duct cells. Detected in colon.

The protein resides in the cell membrane. Its subcellular location is the basolateral cell membrane. The catalysed reaction is glycerol(in) = glycerol(out). The enzyme catalyses H2O(in) = H2O(out). It carries out the reaction urea(in) = urea(out). It catalyses the reaction H2O2(out) = H2O2(in). Its activity is regulated as follows. Channel activity is inhibited by mercury ions. Aquaglyceroporins form homotetrameric transmembrane channels, with each monomer independently mediating glycerol and water transport across the plasma membrane along their osmotic gradient. Could also be permeable to urea. Also participates in cell permeability to H2O2 and H2O2-mediated signaling. In skin, transports glycerol to the epidermis and stratum corneum, where it maintains hydration, elasticity, and supports lipid biosynthesis for barrier repair. In kidney, contributes to the reabsorption of water, helping the body maintain proper fluid balance. This is Aquaporin-3 from Rattus norvegicus (Rat).